A 381-amino-acid chain; its full sequence is Subtilisin NAT (381 aa).

A signal peptide spans 1–29; sequence MRSKKLWISLLFALTLIFTMAFSNMSAQA. Residues 30 to 106 constitute a propeptide that is removed on maturation; sequence AGKSSTEKKY…VEEDHIAHEY (77 aa). The region spanning 38 to 103 is the Inhibitor I9 domain; the sequence is KYIVGFKQTM…VAYVEEDHIA (66 aa). The Peptidase S8 domain occupies 111 to 380; that stretch reads PYGISQIKAP…KGLINVQAAA (270 aa). Asp-138 serves as the catalytic Charge relay system. Asp-147 serves as a coordination point for Ca(2+). His-170 functions as the Charge relay system in the catalytic mechanism. Ca(2+) is bound by residues Leu-181, Asn-183, Ile-185, Val-187, Ala-275, Tyr-277, Thr-280, and Asp-303. Ser-327 serves as the catalytic Charge relay system.

The protein belongs to the peptidase S8 family. In terms of assembly, monomer. Requires Ca(2+) as cofactor.

It localises to the secreted. The enzyme catalyses Hydrolysis of proteins with broad specificity for peptide bonds, and a preference for a large uncharged residue in P1. Hydrolyzes peptide amides.. Inhibited by PMSF (phenylmethylsulfonyl fluoride). Functionally, subtilisin is an extracellular alkaline serine protease, it catalyzes the hydrolysis of proteins and peptide amides. Subtilisin NAT also has fibrinolytic activity. This Bacillus subtilis subsp. natto protein is Subtilisin NAT.